The following is a 179-amino-acid chain: Replication restart protein DnaT (179 aa).

Residues 155 to 179 (NGGLPKRDVNTVSEPDSQIPPGFRG) form a disordered region.

This sequence belongs to the DnaT family. Homooligomerizes. Interacts with PriB. Component of the replication restart primosome. Primosome assembly occurs via a 'hand-off' mechanism. PriA binds to replication forks, subsequently PriB then DnaT bind; DnaT then displaces ssDNA to generate the helicase loading substrate.

Functionally, involved in the restart of stalled replication forks, which reloads the replicative helicase on sites other than the origin of replication. Can function in multiple replication restart pathways. Displaces ssDNA from a PriB-ssDNA complex. Probably forms a spiral filament on ssDNA. The polypeptide is Replication restart protein DnaT (Escherichia coli O8 (strain IAI1)).